Reading from the N-terminus, the 440-residue chain is Inner membrane metabolite transport protein YhjE (440 aa).

At 1-34 (MQATATTLDHEQEYTPINSRNKVLVASLIGTAIE) the chain is on the cytoplasmic side. The chain crosses the membrane as a helical span at residues 35 to 55 (FFDFYIYATAAVIVFPHIFFP). The Periplasmic portion of the chain corresponds to 56–66 (QGDPTAATLQS). A helical membrane pass occupies residues 67–87 (LATFAIAFVARPIGSAVFGHF). Residues 88–108 (GDRVGRKATLVASLLTMGIST) lie on the Cytoplasmic side of the membrane. 2 consecutive transmembrane segments (helical) span residues 109 to 129 (VVIG…LLLA) and 130 to 150 (LARF…ALLA). The Cytoplasmic segment spans residues 151 to 167 (TENAPPRKRALYGSFPQ). A helical transmembrane segment spans residues 168-188 (LGAPIGFFFANGTFLLLSWLL). The Periplasmic segment spans residues 189 to 192 (TDEQ). A helical transmembrane segment spans residues 193–213 (FMSWGWRVPFIFSAVLVIIGL). Topologically, residues 214–248 (YVRVSLHESPVFEKVAKAKKQVKIPLGTLLTKHVR) are cytoplasmic. The helical transmembrane segment at 249-269 (VTVLGTFIMLATYTLFYIMTV) threads the bilayer. At 270–289 (YSMTFSTAAAPVGLGLPRNE) the chain is on the periplasmic side. Residues 290–310 (VLWMLMMAVIGFGVMVPVAGL) form a helical membrane-spanning segment. The Cytoplasmic portion of the chain corresponds to 311–320 (LADAFGRRKS). A helical membrane pass occupies residues 321–341 (MVIITTLIILFALFAFNPLLG). Residues 342–345 (SGNP) lie on the Periplasmic side of the membrane. Residues 346–366 (ILVFAFLLLGLSLMGLTFGPM) form a helical membrane-spanning segment. Residues 367–384 (GALLPELFPTEVRYTGAS) lie on the Cytoplasmic side of the membrane. A helical transmembrane segment spans residues 385–405 (FSYNVASILGASVAPYIAAWL). The Periplasmic portion of the chain corresponds to 406 to 410 (QTNYG). The helical transmembrane segment at 411–431 (LGAVGLYLAAMAGLTLIALLL) threads the bilayer. Topologically, residues 432–440 (THETRHQSL) are cytoplasmic.

This sequence belongs to the major facilitator superfamily. Metabolite:H+ Symporter (MHS) family (TC 2.A.1.6) family.

The protein resides in the cell inner membrane. This Escherichia coli (strain K12) protein is Inner membrane metabolite transport protein YhjE (yhjE).